We begin with the raw amino-acid sequence, 247 residues long: tRNA pseudouridine synthase A (247 aa).

The Nucleophile role is filled by Asp-53. Tyr-111 lines the substrate pocket.

The protein belongs to the tRNA pseudouridine synthase TruA family. Homodimer.

It carries out the reaction uridine(38/39/40) in tRNA = pseudouridine(38/39/40) in tRNA. Functionally, formation of pseudouridine at positions 38, 39 and 40 in the anticodon stem and loop of transfer RNAs. The sequence is that of tRNA pseudouridine synthase A from Bacillus subtilis (strain 168).